The chain runs to 311 residues: Putative UPF0607 protein ENSP00000382826 (311 aa).

Residues 48–61 are compositionally biased toward basic and acidic residues; the sequence is AEEPKEATEVKDQV. 3 disordered regions span residues 48–99, 186–229, and 291–311; these read AEEP…WYNP, GLLM…PLQL, and RKQLLRRRKKTRQGRRGGSCL. The span at 78-97 shows a compositional bias: polar residues; the sequence is EAASTSRPLETQGNLTSSWY. Composition is skewed to basic residues over residues 213–222 and 291–305; these read AGHRSRKRKL and RKQLLRRRKKTRQGR.

This sequence belongs to the UPF0607 family.

The sequence is that of Putative UPF0607 protein ENSP00000382826 from Homo sapiens (Human).